Consider the following 333-residue polypeptide: UDP-3-O-acylglucosamine N-acyltransferase 2 (333 aa).

Catalysis depends on histidine 243, which acts as the Proton acceptor.

It belongs to the transferase hexapeptide repeat family. LpxD subfamily. Homotrimer.

It catalyses the reaction a UDP-3-O-[(3R)-3-hydroxyacyl]-alpha-D-glucosamine + a (3R)-hydroxyacyl-[ACP] = a UDP-2-N,3-O-bis[(3R)-3-hydroxyacyl]-alpha-D-glucosamine + holo-[ACP] + H(+). The protein operates within bacterial outer membrane biogenesis; LPS lipid A biosynthesis. Its function is as follows. Catalyzes the N-acylation of UDP-3-O-acylglucosamine using 3-hydroxyacyl-ACP as the acyl donor. Is involved in the biosynthesis of lipid A, a phosphorylated glycolipid that anchors the lipopolysaccharide to the outer membrane of the cell. The polypeptide is UDP-3-O-acylglucosamine N-acyltransferase 2 (Koribacter versatilis (strain Ellin345)).